A 940-amino-acid polypeptide reads, in one-letter code: Serine/threonine-protein kinase PLK4 (940 aa).

The Protein kinase domain maps to Phe12–Met265. Residues Leu18–Val26 and Lys41 contribute to the ATP site. Residue Asp136 is the Proton acceptor of the active site. 2 disordered regions span residues His262–Arg353 and Arg409–Val529. The span at Ser273 to Arg305 shows a compositional bias: low complexity. 3 stretches are compositionally biased toward polar residues: residues Phe337–Asp349, Asn440–Phe465, and Gly494–Asn519. The 114-residue stretch at Cys563–Lys676 folds into the Cryptic POLO box 1 (CPB1) domain. The Cryptic POLO box 2 (CPB2) domain occupies Thr677 to Pro791. Positions Lys857–Asn935 constitute a POLO box domain.

The protein belongs to the protein kinase superfamily. Ser/Thr protein kinase family. CDC5/Polo subfamily. Homodimer. In terms of processing, ubiquitinated; leading to its degradation by the proteasome.

The protein resides in the cytoplasm. Its subcellular location is the cytoskeleton. It is found in the microtubule organizing center. It localises to the centrosome. The protein localises to the centriole. It catalyses the reaction L-seryl-[protein] + ATP = O-phospho-L-seryl-[protein] + ADP + H(+). It carries out the reaction L-threonyl-[protein] + ATP = O-phospho-L-threonyl-[protein] + ADP + H(+). Serine/threonine-protein kinase that plays a central role in centriole duplication. Able to trigger procentriole formation on the surface of the parental centriole cylinder, leading to the recruitment of centriole biogenesis proteins such as sass6, cpap, ccp110, cep135 and gamma-tubulin. When overexpressed, it is able to induce centrosome amplification through the simultaneous generation of multiple procentrioles adjoining each parental centriole during S phase. Its central role in centriole replication suggests a possible role in tumorigenesis, centrosome aberrations being frequently observed in tumors. Also involved in deuterosome-mediated centriole amplification in multiciliated that can generate more than 100 centrioles. This chain is Serine/threonine-protein kinase PLK4, found in Danio rerio (Zebrafish).